A 278-amino-acid polypeptide reads, in one-letter code: Acyl-[acyl-carrier-protein]--UDP-N-acetylglucosamine O-acyltransferase (278 aa).

Belongs to the transferase hexapeptide repeat family. LpxA subfamily. Homotrimer.

The protein resides in the cytoplasm. The enzyme catalyses a (3R)-hydroxyacyl-[ACP] + UDP-N-acetyl-alpha-D-glucosamine = a UDP-3-O-[(3R)-3-hydroxyacyl]-N-acetyl-alpha-D-glucosamine + holo-[ACP]. It participates in glycolipid biosynthesis; lipid IV(A) biosynthesis; lipid IV(A) from (3R)-3-hydroxytetradecanoyl-[acyl-carrier-protein] and UDP-N-acetyl-alpha-D-glucosamine: step 1/6. Functionally, involved in the biosynthesis of lipid A, a phosphorylated glycolipid that anchors the lipopolysaccharide to the outer membrane of the cell. This Brucella anthropi (strain ATCC 49188 / DSM 6882 / CCUG 24695 / JCM 21032 / LMG 3331 / NBRC 15819 / NCTC 12168 / Alc 37) (Ochrobactrum anthropi) protein is Acyl-[acyl-carrier-protein]--UDP-N-acetylglucosamine O-acyltransferase.